A 493-amino-acid chain; its full sequence is EGF-containing fibulin-like extracellular matrix protein 1 (493 aa).

A signal peptide spans Met-1–Ser-17. One can recognise an EGF-like 1; atypical domain in the interval Tyr-26–Leu-71. The 41-residue stretch at Asp-173–Val-213 folds into the EGF-like 2; calcium-binding domain. Intrachain disulfides connect Cys-177–Cys-190, Cys-184–Cys-199, Cys-201–Cys-212, Cys-218–Cys-228, Cys-224–Cys-237, Cys-239–Cys-252, Cys-258–Cys-268, Cys-264–Cys-277, Cys-279–Cys-292, Cys-298–Cys-309, Cys-305–Cys-318, Cys-320–Cys-332, Cys-338–Cys-350, Cys-344–Cys-359, and Cys-365–Cys-377. The EGF-like 3; calcium-binding domain occupies Asp-214–Val-253. Asn-249 carries an N-linked (GlcNAc...) asparagine glycan. The EGF-like 4; calcium-binding domain maps to Asp-254–Glu-293. The tract at residues Asp-259–Phe-493 is mediates interaction with TIMP3. The EGF-like 5; calcium-binding domain maps to Asp-294–Gln-333. Residues Asp-334–Val-378 form the EGF-like 6; calcium-binding domain.

This sequence belongs to the fibulin family. As to quaternary structure, interacts with ECM1. Interacts with TIMP3. As to expression, expressed by olfactory ensheathing cells (at protein level). Detected in lung, intestine and kidney.

It localises to the secreted. Its subcellular location is the extracellular space. The protein localises to the extracellular matrix. Binds EGFR, the EGF receptor, inducing EGFR autophosphorylation and the activation of downstream signaling pathways. May play a role in cell adhesion and migration. May function as a negative regulator of chondrocyte differentiation. In the olfactory epithelium, it may regulate glial cell migration, differentiation and the ability of glial cells to support neuronal neurite outgrowth. In Rattus norvegicus (Rat), this protein is EGF-containing fibulin-like extracellular matrix protein 1 (Efemp1).